Reading from the N-terminus, the 429-residue chain is N5-carboxyaminoimidazole ribonucleotide synthase (429 aa).

ATP contacts are provided by residues K117, K157, 194–197 (EERV), E202, and 280–281 (NE). Residues 121-310 (RQRLAAAGVA…QFEQHLRAVL (190 aa)) form the ATP-grasp domain. The tract at residues 406-429 (RASDDAVGVPPACGGRSDEEERRL) is disordered.

The protein belongs to the PurK/PurT family. As to quaternary structure, homodimer.

The enzyme catalyses 5-amino-1-(5-phospho-beta-D-ribosyl)imidazole + hydrogencarbonate + ATP = 5-carboxyamino-1-(5-phospho-D-ribosyl)imidazole + ADP + phosphate + 2 H(+). It participates in purine metabolism; IMP biosynthesis via de novo pathway; 5-amino-1-(5-phospho-D-ribosyl)imidazole-4-carboxylate from 5-amino-1-(5-phospho-D-ribosyl)imidazole (N5-CAIR route): step 1/2. In terms of biological role, catalyzes the ATP-dependent conversion of 5-aminoimidazole ribonucleotide (AIR) and HCO(3)(-) to N5-carboxyaminoimidazole ribonucleotide (N5-CAIR). This is N5-carboxyaminoimidazole ribonucleotide synthase from Mycobacterium bovis (strain ATCC BAA-935 / AF2122/97).